The primary structure comprises 75 residues: DNA-directed RNA polymerase subunit omega (75 aa).

This sequence belongs to the RNA polymerase subunit omega family. The RNAP catalytic core consists of 2 alpha, 1 beta, 1 beta' and 1 omega subunit. When a sigma factor is associated with the core the holoenzyme is formed, which can initiate transcription.

It carries out the reaction RNA(n) + a ribonucleoside 5'-triphosphate = RNA(n+1) + diphosphate. Promotes RNA polymerase assembly. Latches the N- and C-terminal regions of the beta' subunit thereby facilitating its interaction with the beta and alpha subunits. The polypeptide is DNA-directed RNA polymerase subunit omega (Nitratidesulfovibrio vulgaris (strain DSM 19637 / Miyazaki F) (Desulfovibrio vulgaris)).